Consider the following 234-residue polypeptide: SPX domain-containing protein 6 (234 aa).

The SPX domain maps to 1–137; sequence MKFGKLLKRQ…GGALAAPVAE (137 aa). The disordered stretch occupies residues 202–234; it reads GSSTHGRHSLPPLTLPDSDWLRSFQPPSPIPIQ.

In terms of tissue distribution, predominantly expressed in roots and leaves.

May be involved in maintaining cellular Pi homeostasis when plants are exposed to an external change in Pi. The protein is SPX domain-containing protein 6 of Oryza sativa subsp. japonica (Rice).